Consider the following 104-residue polypeptide: UPF0145 protein GTNG_1265 (104 aa).

This sequence belongs to the UPF0145 family.

The chain is UPF0145 protein GTNG_1265 from Geobacillus thermodenitrificans (strain NG80-2).